The sequence spans 535 residues: Dipeptide-binding protein (535 aa).

The signal sequence occupies residues 1 to 28 (MRISLKKSGMLKLGLSLVAMTVAASVQA). Residues C34 and C262 are joined by a disulfide bond. Residues 48–50 (TSG), 383–385 (RPY), and 433–436 (WTGD) each bind glycyl-L-leucine. An intrachain disulfide couples C450 to C463.

The protein belongs to the bacterial solute-binding protein 5 family. In terms of assembly, the complex is composed of two ATP-binding proteins (DppD and DppF), two transmembrane proteins (DppB and DppC) and a solute-binding protein (DppA).

The protein localises to the periplasm. With respect to regulation, heme binding is inhibited by dipeptide. Its function is as follows. Part of the ABC transporter DppABCDF involved in dipeptide transport. Binds dipeptides and accepts a wide range of side chains, including small neutral, bulky hydrophobic, and positively and negatively charged groups. Tripeptides are poor substrates. DppA alone controls the specificity of the Dpp transporter. In addition, plays a role in chemotaxis toward peptides via interaction with the chemotaxis protein Tap. In terms of biological role, binds heme. When a foreign outer membrane heme receptor is expressed in E.coli, DppABCDF can also transport heme and its precursor, 5-aminolevulinic acid (ALA), from the periplasm into the cytoplasm. The sequence is that of Dipeptide-binding protein from Escherichia coli (strain K12).